We begin with the raw amino-acid sequence, 410 residues long: Replication-associated protein G2P (410 aa).

An N-formylmethionine modification is found at Met1.

Belongs to the inovirus G2P protein family.

It catalyses the reaction ATP + (deoxyribonucleotide)n-3'-hydroxyl + 5'-phospho-(deoxyribonucleotide)m = (deoxyribonucleotide)n+m + AMP + diphosphate.. In terms of biological role, isoform G2P plays an essential role in viral DNA replication. Binds the origin of replication and cleaves the dsDNA replicative form I (RFI) and becomes covalently bound to it via phosphotyrosine bond, generating the dsDNA replicative form II (RFII). In turn, viral DNA replication initiates at the 3'-OH of the cleavage site. After one round of rolling circle synthesis, protein G2P is linked to the newly synthesized ssDNA and joins the ends of the displaced strand to generate a circular single-stranded molecule ready to be packed into a virion. Functionally, isoform G10P protein binds to double-stranded DNA and prevents hydrolysis by nucleases. Additionally, G10P is an inhibitor of DNA replication and may have a role in the transition from semiconservative replicative form DNA replication to single-stranded DNA synthesis in the life cycle. The chain is Replication-associated protein G2P (II) from Enterobacteria phage f1 (Bacteriophage f1).